We begin with the raw amino-acid sequence, 420 residues long: Phosphoribosylamine--glycine ligase (420 aa).

The region spanning 108-314 (KQFMEKYAIP…FAALIAALLN (207 aa)) is the ATP-grasp domain. 134–195 (LDERGVPIVI…EDFLAGEEFS (62 aa)) is an ATP binding site. Residues glutamate 284 and asparagine 286 each coordinate Mg(2+).

This sequence belongs to the GARS family. Mg(2+) is required as a cofactor. The cofactor is Mn(2+).

It carries out the reaction 5-phospho-beta-D-ribosylamine + glycine + ATP = N(1)-(5-phospho-beta-D-ribosyl)glycinamide + ADP + phosphate + H(+). Its pathway is purine metabolism; IMP biosynthesis via de novo pathway; N(1)-(5-phospho-D-ribosyl)glycinamide from 5-phospho-alpha-D-ribose 1-diphosphate: step 2/2. This Listeria innocua serovar 6a (strain ATCC BAA-680 / CLIP 11262) protein is Phosphoribosylamine--glycine ligase.